We begin with the raw amino-acid sequence, 205 residues long: Guanylate kinase (205 aa).

The Guanylate kinase-like domain occupies 18–196; the sequence is PKLFIISAPA…AYQVLRSIFI (179 aa). 25–32 is an ATP binding site; sequence APAGAGKT.

Belongs to the guanylate kinase family.

The protein localises to the cytoplasm. It carries out the reaction GMP + ATP = GDP + ADP. Functionally, essential for recycling GMP and indirectly, cGMP. The sequence is that of Guanylate kinase (gmk) from Chlamydia trachomatis serovar D (strain ATCC VR-885 / DSM 19411 / UW-3/Cx).